The following is a 286-amino-acid chain: 3-hydroxyanthranilate 3,4-dioxygenase (286 aa).

The interval 1–160 (MERRVRVKSW…SEQYRTGKPN (160 aa)) is domain A (catalytic). Arginine 43 is an O2 binding site. Fe cation contacts are provided by histidine 47, glutamate 53, and histidine 91. Substrate is bound at residue glutamate 53. Substrate is bound by residues arginine 95 and glutamate 105. The segment at 161–177 (PDQLLKELPFPLNTRSI) is linker. The segment at 178 to 286 (MKPMSLKAWL…QDPARKKPWW (109 aa)) is domain B.

The protein belongs to the 3-HAO family. As to quaternary structure, monomer. Fe(2+) serves as cofactor.

It is found in the cytoplasm. It localises to the cytosol. The catalysed reaction is 3-hydroxyanthranilate + O2 = (2Z,4Z)-2-amino-3-carboxymuconate 6-semialdehyde. Its pathway is cofactor biosynthesis; NAD(+) biosynthesis; quinolinate from L-kynurenine: step 3/3. In terms of biological role, catalyzes the oxidative ring opening of 3-hydroxyanthranilate to 2-amino-3-carboxymuconate semialdehyde, which spontaneously cyclizes to quinolinate. In Mus musculus (Mouse), this protein is 3-hydroxyanthranilate 3,4-dioxygenase (Haao).